The chain runs to 310 residues: tRNA uridine(34) hydroxylase (310 aa).

The region spanning 134-232 (DDPDTLLIDT…YFEEVSQTES (99 aa)) is the Rhodanese domain. Residue C192 is the Cysteine persulfide intermediate of the active site.

This sequence belongs to the TrhO family.

The catalysed reaction is uridine(34) in tRNA + AH2 + O2 = 5-hydroxyuridine(34) in tRNA + A + H2O. Its function is as follows. Catalyzes oxygen-dependent 5-hydroxyuridine (ho5U) modification at position 34 in tRNAs. This chain is tRNA uridine(34) hydroxylase, found in Prochlorococcus marinus (strain MIT 9313).